Here is a 182-residue protein sequence, read N- to C-terminus: Peptidoglycan L,D-endopeptidase MepK (182 aa).

The tat-type signal signal peptide spans 1–30; it reads MDKFDANRRKLLALGGVALGAAILPTPAFA. Positions 133, 140, and 173 each coordinate Zn(2+).

This sequence belongs to the peptidase M15 family. Requires Zn(2+) as cofactor. Predicted to be exported by the Tat system. The position of the signal peptide cleavage has not been experimentally proven.

Its pathway is cell wall biogenesis; cell wall polysaccharide biosynthesis. In terms of biological role, l,D-endopeptidase that cleaves meso-diaminopimelic acid (mDAP)-mDAP cross-links in peptidoglycan. It works in conjunction with other elongation-specific D,D-endopeptidases to make space for efficient incorporation of nascent peptidoglycan strands into the sacculus and thus enable cell wall expansion. This chain is Peptidoglycan L,D-endopeptidase MepK, found in Escherichia coli O157:H7.